The primary structure comprises 411 residues: Acetyl-coenzyme A carboxylase carboxyl transferase subunit beta, chloroplastic (411 aa).

The region spanning 32 to 302 (LWTRCDHCGV…KEQGRIPYGE (271 aa)) is the CoA carboxyltransferase N-terminal domain. Residues Cys-36, Cys-39, Cys-55, and Cys-58 each coordinate Zn(2+). The C4-type zinc-finger motif lies at 36–58 (CDHCGVILYIKHLKENQRVCFGC).

It belongs to the AccD/PCCB family. In terms of assembly, acetyl-CoA carboxylase is a heterohexamer composed of biotin carboxyl carrier protein, biotin carboxylase and 2 subunits each of ACCase subunit alpha and ACCase plastid-coded subunit beta (accD). Zn(2+) is required as a cofactor.

It localises to the plastid. It is found in the chloroplast stroma. The catalysed reaction is N(6)-carboxybiotinyl-L-lysyl-[protein] + acetyl-CoA = N(6)-biotinyl-L-lysyl-[protein] + malonyl-CoA. Its pathway is lipid metabolism; malonyl-CoA biosynthesis; malonyl-CoA from acetyl-CoA: step 1/1. Functionally, component of the acetyl coenzyme A carboxylase (ACC) complex. Biotin carboxylase (BC) catalyzes the carboxylation of biotin on its carrier protein (BCCP) and then the CO(2) group is transferred by the transcarboxylase to acetyl-CoA to form malonyl-CoA. The chain is Acetyl-coenzyme A carboxylase carboxyl transferase subunit beta, chloroplastic from Chlorella vulgaris (Green alga).